The sequence spans 273 residues: Ribosomal RNA small subunit methyltransferase A (273 aa).

Asparagine 18, leucine 20, glycine 45, glutamate 66, aspartate 91, and asparagine 113 together coordinate S-adenosyl-L-methionine.

This sequence belongs to the class I-like SAM-binding methyltransferase superfamily. rRNA adenine N(6)-methyltransferase family. RsmA subfamily.

It localises to the cytoplasm. The enzyme catalyses adenosine(1518)/adenosine(1519) in 16S rRNA + 4 S-adenosyl-L-methionine = N(6)-dimethyladenosine(1518)/N(6)-dimethyladenosine(1519) in 16S rRNA + 4 S-adenosyl-L-homocysteine + 4 H(+). Functionally, specifically dimethylates two adjacent adenosines (A1518 and A1519) in the loop of a conserved hairpin near the 3'-end of 16S rRNA in the 30S particle. May play a critical role in biogenesis of 30S subunits. This is Ribosomal RNA small subunit methyltransferase A from Shigella dysenteriae serotype 1 (strain Sd197).